A 113-amino-acid chain; its full sequence is B-type lectin plumieribetin (113 aa).

Positions 1–109 constitute a Bulb-type lectin domain; the sequence is NYLSKNDELR…STEIWNSDKN (109 aa).

Homotetramer. Interacts with alpha-1-beta-1 integrin (ITGA1/ITGB1). Not glycosylated. Not N-glycosylated and not O-glycosylated with the mostcommon O-linked glycoconjugates. In terms of processing, the N-terminus is blocked. In terms of tissue distribution, expressed by sting venom glands and is also found in skin mucus. Not found in other tissues tested.

It is found in the secreted. Functionally, may contribute to some of the local and systemic effects of envenomation by the scorpionfish. Preferentially recognizes mannose-containing carbohydrate structures, but its interaction with single mannose residues is weak. Potently inhibits alpha-1-beta-1 integrin (ITGA1/ITGB1) binding to basement membrane collagen IV in a divalent cation-independent manner. In addition, moderately inhibits both laminin binding integrins alpha-3-beta-1 (ITGA3/ITGB1) and alpha-7-beta-1 (ITGA7/ITGB1). Weakens the cell-collagen contacts, reduces cell spreading, and alters the actin cytoskeleton, after the compensating alpha-2-beta-1 integrin is blocked. On the cellular level, fails to completely detach hepatocarcinoma HepG2 cells and primary arterial smooth muscle cells from the collagen IV fragment CB3. The polypeptide is B-type lectin plumieribetin (Scorpaena plumieri (Spotted scorpionfish)).